Reading from the N-terminus, the 585-residue chain is Probable G-protein coupled receptor Mth-like 10 (585 aa).

The signal sequence occupies residues 1–32; it reads MPKKIHQPGGSLYCGVTLLGVLCLVVFRLIPG. Topologically, residues 33-250 are extracellular; that stretch reads IPFGTYVMAE…DHSTVKIINS (218 aa). 5 disulfide bridges follow: Cys-56–Cys-110, Cys-112–Cys-117, Cys-121–Cys-216, Cys-122–Cys-135, and Cys-177–Cys-236. 2 N-linked (GlcNAc...) asparagine glycosylation sites follow: Asn-63 and Asn-72. Asn-142, Asn-152, Asn-157, Asn-198, and Asn-223 each carry an N-linked (GlcNAc...) asparagine glycan. The helical transmembrane segment at 251–271 threads the bilayer; it reads YAMMFSIPFMMLTIAVYLLIP. The Cytoplasmic segment spans residues 272 to 280; it reads ELRNQHGKS. Residues 281-301 traverse the membrane as a helical segment; that stretch reads LVCYLIGLSVGYSSLCYVQLY. Over 302 to 312 the chain is Extracellular; sequence QVDATGVTCKV. Residues 313–333 form a helical membrane-spanning segment; that stretch reads FGYTAYFFFMGAYMWLSVISF. Residues 334–353 lie on the Cytoplasmic side of the membrane; the sequence is DLWHNFRGTRGINRFQEKKR. The helical transmembrane segment at 354–374 threads the bilayer; sequence FLFYSLYSWGIALVFLAFTYC. Over 375 to 404 the chain is Extracellular; sequence AQQLTNLPANLKPGIGDGVYCWLDMSNWAA. The chain crosses the membrane as a helical span at residues 405-425; that stretch reads MIYFYGPILAIVVANTIMFIM. Residues 426–466 are Cytoplasmic-facing; that stretch reads TAIKIHGVQREMARIIASENSTKNLRTEKDKRFYRAWSNYR. The helical transmembrane segment at 467-487 threads the bilayer; it reads FGLFLRLFLIMGITWLTELIS. The Extracellular portion of the chain corresponds to 488–498; it reads YFVGSDKGWSK. The helical transmembrane segment at 499-519 threads the bilayer; sequence LFYISDLANAMQGFLIFMLFV. At 520–585 the chain is on the cytoplasmic side; that stretch reads MKKKVKHLIT…VDPQKTTIFR (66 aa).

This sequence belongs to the G-protein coupled receptor 2 family. Mth subfamily.

It localises to the cell membrane. The polypeptide is Probable G-protein coupled receptor Mth-like 10 (mthl10) (Drosophila melanogaster (Fruit fly)).